The primary structure comprises 107 residues: uncharacterized protein (107 aa).

Over methionine 1–valine 4 the chain is Cytoplasmic. Residues isoleucine 5 to isoleucine 25 traverse the membrane as a helical segment. Over lysine 26–lysine 107 the chain is Extracellular.

The protein resides in the host membrane. This is an uncharacterized protein from Acidianus sp. F28 (AFV-2).